The primary structure comprises 314 residues: Inosine-uridine preferring nucleoside hydrolase (314 aa).

Residue Asp10 participates in Ca(2+) binding. A substrate-binding site is contributed by Asp14. Residues Asp15 and Thr126 each contribute to the Ca(2+) site. Substrate is bound by residues Asn160, Glu166, and Asn168. Catalysis depends on His240, which acts as the Proton donor. A Ca(2+)-binding site is contributed by Asp241.

This sequence belongs to the IUNH family. In terms of assembly, homotetramer. Ca(2+) serves as cofactor.

The enzyme catalyses inosine + H2O = hypoxanthine + D-ribose. It carries out the reaction uridine + H2O = D-ribose + uracil. Its pathway is purine metabolism; purine nucleoside salvage. Its activity is regulated as follows. Is potently inhibited by immucillin A and immucillin ACAP, which are transition state inhibitors. Catalyzes the hydrolysis of the N-glycosidic bond of all of the commonly occurring purine and pyrimidine nucleosides into ribose and the associated base, but has a preference for inosine and uridine as substrates. Likely functions in purine salvage from the host, a fundamental pathway since protozoan parasites such as L.major are incapable of de novo purine biosynthesis. This is Inosine-uridine preferring nucleoside hydrolase (NSNH) from Leishmania major.